A 117-amino-acid chain; its full sequence is Immunoglobulin lambda variable 7-46 (117 aa).

The signal sequence occupies residues 1–19 (MAWTPLFLFLLTCCPGSNS). The tract at residues 20–44 (QAVVTQEPSLTVSPGGTVTLTCGSS) is framework-1. Positions 20 to 117 (QAVVTQEPSL…YCLLSYSGAR (98 aa)) constitute an Ig-like domain. Cysteine 41 and cysteine 109 form a disulfide bridge. The segment at 45-53 (TGAVTSGHY) is complementarity-determining-1. The tract at residues 54–70 (PYWFQQKPGQAPRTLIY) is framework-2. A complementarity-determining-2 region spans residues 71 to 73 (DTS). A framework-3 region spans residues 74–109 (NKHSWTPARFSGSLLGGKAALTLLGAQPEDEAEYYC). The tract at residues 110 to 117 (LLSYSGAR) is complementarity-determining-3.

In terms of assembly, immunoglobulins are composed of two identical heavy chains and two identical light chains; disulfide-linked.

It localises to the secreted. It is found in the cell membrane. V region of the variable domain of immunoglobulin light chains that participates in the antigen recognition. Immunoglobulins, also known as antibodies, are membrane-bound or secreted glycoproteins produced by B lymphocytes. In the recognition phase of humoral immunity, the membrane-bound immunoglobulins serve as receptors which, upon binding of a specific antigen, trigger the clonal expansion and differentiation of B lymphocytes into immunoglobulins-secreting plasma cells. Secreted immunoglobulins mediate the effector phase of humoral immunity, which results in the elimination of bound antigens. The antigen binding site is formed by the variable domain of one heavy chain, together with that of its associated light chain. Thus, each immunoglobulin has two antigen binding sites with remarkable affinity for a particular antigen. The variable domains are assembled by a process called V-(D)-J rearrangement and can then be subjected to somatic hypermutations which, after exposure to antigen and selection, allow affinity maturation for a particular antigen. In Homo sapiens (Human), this protein is Immunoglobulin lambda variable 7-46.